We begin with the raw amino-acid sequence, 376 residues long: Alpha-2,8-sialyltransferase 8E (376 aa).

Topologically, residues 1–17 (MRYADPSANRDLLGSRT) are cytoplasmic. Residues 18–38 (LLFIFICAFALVTLLQQILYG) traverse the membrane as a helical; Signal-anchor for type II membrane protein segment. Residues 39–376 (RNYIKRYFEF…RVHTGTCSCC (338 aa)) are Lumenal-facing. 2 N-linked (GlcNAc...) asparagine glycosylation sites follow: Asn56 and Asn96. Disulfide bonds link Cys164/Cys313 and Cys178/Cys373. Substrate-binding positions include Asn192 and 214–216 (NPS). N-linked (GlcNAc...) asparagine glycans are attached at residues Asn241 and Asn284. Residue 300 to 302 (STG) coordinates substrate. His348 serves as the catalytic Proton donor/acceptor.

Belongs to the glycosyltransferase 29 family. Expressed in fetal and adult brain, adult heart and skeletal muscle. As to expression, expressed in fetal and adult brain, not detected in adult heart and skeletal muscle.

Its subcellular location is the golgi apparatus membrane. The enzyme catalyses a ganglioside GT1b (d18:1(4E)) + CMP-N-acetyl-beta-neuraminate = a ganglioside GQ1b (d18:1(4E)) + CMP + H(+). It carries out the reaction a ganglioside GD3 (d18:1(4E)) + CMP-N-acetyl-beta-neuraminate = a ganglioside GT3 (d18:1(4E)) + CMP + H(+). It catalyses the reaction a ganglioside GD1a (d18:1(4E)) + CMP-N-acetyl-beta-neuraminate = a ganglioside GT1a (d18:1(4E)) + CMP + H(+). The catalysed reaction is a ganglioside GM1b (d18:1(4E)) + CMP-N-acetyl-beta-neuraminate = a ganglioside GD1c (d18:1(4E)) + CMP + H(+). The enzyme catalyses a ganglioside GQ1c (d18:1(4E)) + CMP-N-acetyl-beta-neuraminate = a ganglioside GP1c (d18:1(4E)) + CMP + H(+). It participates in protein modification; protein glycosylation. In terms of biological role, involved in the synthesis of gangliosides GD1c, GT1a, GQ1b, GP1c and GT3 from GD1a, GT1b, GM1b and GD3 respectively. In Homo sapiens (Human), this protein is Alpha-2,8-sialyltransferase 8E.